The primary structure comprises 206 residues: Putative transporter protein AmiS2 (206 aa).

A run of 7 helical transmembrane segments spans residues 4-24, 29-49, 56-76, 86-106, 113-133, 142-162, and 173-193; these read VGLLYVGAVLFVNGLMLLGTV, ASVLNLFVGALQCVVPTVMLI, SAVLAASGLYLFGFTYLYVGI, GIGWFSLFVACAALVYSFLSF, VFGVIWLAWAALWTLFFLVLG, FTGWAAILLSQPTCTVPAFLI, and VAAGWAGALLVLLGLAKILAA.

Belongs to the AmiS/UreI family.

The protein resides in the cell membrane. Functionally, possible transporter that might be responsible for the adsorption of amidase substrates or release of their hydrolysis products. This is Putative transporter protein AmiS2 (amiS2) from Rhodococcus erythropolis (Arthrobacter picolinophilus).